The sequence spans 374 residues: Autophagy-related protein 18e (374 aa).

WD repeat units follow at residues 28 to 66 (KSDLKVLSVAWNQVCSGFIVGTNHGFNVYSCKPMIKKSI), 72 to 117 (ESGF…CLSE), 202 to 242 (AHDS…LLQE), and 247 to 286 (VERAEIYNVAISSNLKWVAASSEKGTLHVFRLRPDILSFD).

This sequence belongs to the WD repeat PROPPIN family. Component of the PI(3,5)P2 regulatory complex at least composed of ATG18, SAC/FIG4, FAB1 and VAC14.

The protein localises to the preautophagosomal structure membrane. Its subcellular location is the vacuole membrane. The PI(3,5)P2 regulatory complex regulates both the synthesis and turnover of phosphatidylinositol 3,5-bisphosphate (PtdIns(3,5)P2). Required for autophagy. The protein is Autophagy-related protein 18e (ATG18E) of Arabidopsis thaliana (Mouse-ear cress).